Here is a 62-residue protein sequence, read N- to C-terminus: Large ribosomal subunit protein bL28 (62 aa).

This sequence belongs to the bacterial ribosomal protein bL28 family.

The sequence is that of Large ribosomal subunit protein bL28 from Halalkalibacterium halodurans (strain ATCC BAA-125 / DSM 18197 / FERM 7344 / JCM 9153 / C-125) (Bacillus halodurans).